A 159-amino-acid polypeptide reads, in one-letter code: V-type proton ATPase 16 kDa proteolipid subunit c (159 aa).

At 1 to 12 the chain is on the lumenal side; that stretch reads MSSEVSSDNPIY. Residues 13 to 35 form a helical membrane-spanning segment; that stretch reads GPFFGVMGAASAIIFSALGAAYG. Residues 36-57 lie on the Cytoplasmic side of the membrane; the sequence is TAKSGTGIAAMSVMRPELIMKS. Residues 58–78 traverse the membrane as a helical segment; that stretch reads IIPVVMAGIIAIYGLVVAVLI. The Lumenal portion of the chain corresponds to 79–96; that stretch reads AGALEEPSKYSLYRGFIH. Residues 97–118 traverse the membrane as a helical segment; it reads LGAGLAVGFSGLAAGFAIGIVG. The Cytoplasmic portion of the chain corresponds to 119–130; that stretch reads DAGVRGTAQQPR. The helical transmembrane segment at 131–156 threads the bilayer; the sequence is LFVGMILILIFAEVLGLYGLIVAIYL. The Lumenal portion of the chain corresponds to 157 to 159; it reads YTK.

It belongs to the V-ATPase proteolipid subunit family. V-ATPase is a heteromultimeric enzyme made up of two complexes: the ATP-hydrolytic V1 complex and the proton translocation V0 complex. The V1 complex consists of three catalytic AB heterodimers that form a heterohexamer, three peripheral stalks each consisting of EG heterodimers, one central rotor including subunits D and F, and the regulatory subunits C and H. The proton translocation complex V0 consists of the proton transport subunit a, a ring of proteolipid subunits c9c'', rotary subunit d, subunits e and f, and the accessory subunits VhaAC45 and ATP6AP2. As to expression, expressed in the larval middle mid-gut; predominantly in the copper cell region with lower levels of expression in the interstitial cells.

The protein localises to the membrane. Proton-conducting pore forming subunit of the V0 complex of vacuolar(H+)-ATPase (V-ATPase), a multisubunit enzyme composed of a peripheral complex (V1) that hydrolyzes ATP and a membrane integral complex (V0) that translocates protons. V-ATPase is responsible for acidifying and maintaining the pH of intracellular compartments and in some cell types, is targeted to the plasma membrane, where it is responsible for acidifying the extracellular environment. In enterocytes, acts as part of a pHCl-2 sensory pathway which mediates Tor-dependent larval growth and metabolism in response to zinc availability. Likely acts in maintaining enterocyte lysosomal acidification which consequently promotes Tor activation at the lysosome membrane. The polypeptide is V-type proton ATPase 16 kDa proteolipid subunit c (Vha16-1) (Drosophila melanogaster (Fruit fly)).